The sequence spans 411 residues: MSEDSRRAEDDDRGPGAAYQAFLMMEDLLDKLKLLSYEDEVLRKQNMKPLSRHYFALPTNPGEQFYMFCTLSAWLINKAGNNFDQPQEYDDPNATISNILSQLRSFGYSVDFPPSRLKAGYGEQVCYVLDCFAEEVLKHIRFSWKRPTYPTEEQDEETVVEDDAELTLNKIEDEIAEEDSDNDQEHFIDLKALSAQTQKLNAEESSKPEEILESNTDAAEWILEVERVLPQLKVTIRTDNKDWRVHVDQMHQHRDGIDTSLKETKGYLDKLHNEIAKALEKVSSREKYINNQLEQLVQEYRSAQAQLSEAKERYQQASGGVTERTRILAEITEELEKVKQEMEEKGSSMTDGAPLVKIKQALTKLKHEIVQMDIRTGVVEHTLLQSTLKEKSNMTRDMHALNIPDSSIGAY.

Positions L261–D351 form a coiled coil. Residues A317–I408 form a pDED region.

It belongs to the IFT57 family.

It is found in the cytoplasm. It localises to the cytoskeleton. The protein localises to the cilium basal body. In terms of biological role, required for the formation of cilia. May also have pro-apoptotic function. The sequence is that of Intraflagellar transport protein 57 homolog (ift57) from Xenopus laevis (African clawed frog).